The following is a 210-amino-acid chain: Proteasome subunit beta 2 (210 aa).

Residues 1–12 constitute a propeptide, removed in mature form; by autocatalysis; that stretch reads MSNNVEEKILHG. The Nucleophile role is filled by T13.

Belongs to the peptidase T1B family. As to quaternary structure, the 20S proteasome core is composed of 14 alpha and 14 beta subunits that assemble into four stacked heptameric rings, resulting in a barrel-shaped structure. The two inner rings, each composed of seven catalytic beta subunits, are sandwiched by two outer rings, each composed of seven alpha subunits. The catalytic chamber with the active sites is on the inside of the barrel. Has a gated structure, the ends of the cylinder being occluded by the N-termini of the alpha-subunits. Is capped at one or both ends by the proteasome regulatory ATPase, PAN.

The protein localises to the cytoplasm. The enzyme catalyses Cleavage of peptide bonds with very broad specificity.. Its activity is regulated as follows. The formation of the proteasomal ATPase PAN-20S proteasome complex, via the docking of the C-termini of PAN into the intersubunit pockets in the alpha-rings, triggers opening of the gate for substrate entry. Interconversion between the open-gate and close-gate conformations leads to a dynamic regulation of the 20S proteasome proteolysis activity. Functionally, component of the proteasome core, a large protease complex with broad specificity involved in protein degradation. The polypeptide is Proteasome subunit beta 2 (Cenarchaeum symbiosum (strain A)).